A 211-amino-acid chain; its full sequence is Uracil phosphoribosyltransferase (211 aa).

5-phospho-alpha-D-ribose 1-diphosphate is bound by residues Arg78, Arg103, and 130-138 (DPMLATGGT). Uracil-binding positions include Ile195 and 200–202 (GDA). 5-phospho-alpha-D-ribose 1-diphosphate is bound at residue Asp201.

The protein belongs to the UPRTase family. Mg(2+) serves as cofactor.

The enzyme catalyses UMP + diphosphate = 5-phospho-alpha-D-ribose 1-diphosphate + uracil. It participates in pyrimidine metabolism; UMP biosynthesis via salvage pathway; UMP from uracil: step 1/1. Its activity is regulated as follows. Allosterically activated by GTP. Catalyzes the conversion of uracil and 5-phospho-alpha-D-ribose 1-diphosphate (PRPP) to UMP and diphosphate. The polypeptide is Uracil phosphoribosyltransferase (Pseudarthrobacter chlorophenolicus (strain ATCC 700700 / DSM 12829 / CIP 107037 / JCM 12360 / KCTC 9906 / NCIMB 13794 / A6) (Arthrobacter chlorophenolicus)).